Here is a 150-residue protein sequence, read N- to C-terminus: Probable NADH dehydrogenase [ubiquinone] 1 alpha subcomplex subunit 5 (150 aa).

The protein belongs to the complex I NDUFA5 subunit family. In terms of assembly, complex I is composed of 45 different subunits.

It is found in the mitochondrion inner membrane. Its function is as follows. Accessory subunit of the mitochondrial membrane respiratory chain NADH dehydrogenase (Complex I), that is believed not to be involved in catalysis. Complex I functions in the transfer of electrons from NADH to the respiratory chain. The immediate electron acceptor for the enzyme is believed to be ubiquinone. This chain is Probable NADH dehydrogenase [ubiquinone] 1 alpha subcomplex subunit 5, found in Caenorhabditis elegans.